Here is a 520-residue protein sequence, read N- to C-terminus: RING-type E3 ubiquitin-protein ligase PPIL2 (520 aa).

In terms of domain architecture, U-box spans 35 to 108; sequence RRLPFDHCSL…GKYHCPVLFT (74 aa). Residues 197–217 adopt a coiled-coil conformation; that stretch reads LKNTNAETRETLQELYKEFKG. A Glycyl lysine isopeptide (Lys-Gly) (interchain with G-Cter in SUMO2) cross-link involves residue Lys-216. Positions 278–433 constitute a PPIase cyclophilin-type domain; it reads KKGYVRLHTN…EEIRIDATTV (156 aa). The segment at 456-520 is disordered; that stretch reads APETKVKSSQ…SRGFGDFSSW (65 aa). The span at 463 to 474 shows a compositional bias: low complexity; it reads SSQPQAGSQGPQ. At Ser-470 the chain carries Phosphoserine. An N6-acetyllysine modification is found at Lys-482.

This sequence belongs to the cyclophilin-type PPIase family. PPIL2 subfamily. As to quaternary structure, component of the minor spliceosome, which splices U12-type introns. Within this complex, interacts with PRPF8/PRP8, EFTUD2/SNU114 and PLRG1. Interacts with isoform 2 of BSG. Interacts (via the PPIase cyclophilin-type domain) with CRNKL1; they may form a trimeric complex with HSP90. As to expression, highest expression in thymus, pancreas and testis. Also detected in heart, placenta, lung, liver, skeletal muscle, kidney, spleen, prostate, ovary, small intestine and colon. Poorly detected in brain and leukocytes. Strong protein expression in lymph node (cortical, paracortical and medullar regions), thyroid (follicular epithelial cells), testis (developing spermatozoa), stomach (cells lining the gastric pit), pancreas, kidney (proximal and distal-tubule cells and collecting duct cells but not in glomeruli), endometrium and colon (goblet cells). Moderate protein expression in spleen, prostate (epithelium and squamous cell carcinomas), placenta and adrenal gland. Weak protein expression in liver, heart, breast, ovary, and lung. No protein expression in brain and bladder. High protein expression in most lymphomas and melanomas.

It localises to the nucleus. It catalyses the reaction S-ubiquitinyl-[E2 ubiquitin-conjugating enzyme]-L-cysteine + [acceptor protein]-L-lysine = [E2 ubiquitin-conjugating enzyme]-L-cysteine + N(6)-ubiquitinyl-[acceptor protein]-L-lysine.. It participates in protein modification; protein ubiquitination. Its function is as follows. Has a ubiquitin-protein ligase activity acting as an E3 ubiquitin protein ligase or as an ubiquitin-ubiquitin ligase promoting elongation of ubiquitin chains on substrates. By mediating 'Lys-48'-linked polyubiquitination of proteins could target them for proteasomal degradation. May also function as a chaperone, playing a role in transport to the cell membrane of BSG/Basigin for instance. Probable inactive PPIase with no peptidyl-prolyl cis-trans isomerase activity. As a component of the minor spliceosome, involved in the splicing of U12-type introns in pre-mRNAs. The protein is RING-type E3 ubiquitin-protein ligase PPIL2 of Homo sapiens (Human).